The following is a 293-amino-acid chain: Formamidopyrimidine-DNA glycosylase (293 aa).

Residue P2 is the Schiff-base intermediate with DNA of the active site. E3 acts as the Proton donor in catalysis. K60 (proton donor; for beta-elimination activity) is an active-site residue. DNA-binding residues include H110, R129, and R174. An FPG-type zinc finger spans residues 259 to 293 (NVYRRTGKECRKCGNLIERKKISGRSTHWCPKCQK). The active-site Proton donor; for delta-elimination activity is the R283.

Belongs to the FPG family. In terms of assembly, monomer. The cofactor is Zn(2+).

The catalysed reaction is Hydrolysis of DNA containing ring-opened 7-methylguanine residues, releasing 2,6-diamino-4-hydroxy-5-(N-methyl)formamidopyrimidine.. The enzyme catalyses 2'-deoxyribonucleotide-(2'-deoxyribose 5'-phosphate)-2'-deoxyribonucleotide-DNA = a 3'-end 2'-deoxyribonucleotide-(2,3-dehydro-2,3-deoxyribose 5'-phosphate)-DNA + a 5'-end 5'-phospho-2'-deoxyribonucleoside-DNA + H(+). Functionally, involved in base excision repair of DNA damaged by oxidation or by mutagenic agents. Acts as a DNA glycosylase that recognizes and removes damaged bases. Has a preference for oxidized purines, such as 7,8-dihydro-8-oxoguanine (8-oxoG). Has AP (apurinic/apyrimidinic) lyase activity and introduces nicks in the DNA strand. Cleaves the DNA backbone by beta-delta elimination to generate a single-strand break at the site of the removed base with both 3'- and 5'-phosphates. This is Formamidopyrimidine-DNA glycosylase from Prochlorococcus marinus (strain MIT 9215).